Reading from the N-terminus, the 101-residue chain is Urease subunit beta (101 aa).

Belongs to the urease beta subunit family. In terms of assembly, heterotrimer of UreA (gamma), UreB (beta) and UreC (alpha) subunits. Three heterotrimers associate to form the active enzyme.

It is found in the cytoplasm. It catalyses the reaction urea + 2 H2O + H(+) = hydrogencarbonate + 2 NH4(+). Its pathway is nitrogen metabolism; urea degradation; CO(2) and NH(3) from urea (urease route): step 1/1. This is Urease subunit beta from Rhodopseudomonas palustris (strain ATCC BAA-98 / CGA009).